The following is a 224-amino-acid chain: Large ribosomal subunit protein uL3 (224 aa).

Glutamine 159 carries the post-translational modification N5-methylglutamine.

It belongs to the universal ribosomal protein uL3 family. Part of the 50S ribosomal subunit. Forms a cluster with proteins L14 and L19. Post-translationally, methylated by PrmB.

Functionally, one of the primary rRNA binding proteins, it binds directly near the 3'-end of the 23S rRNA, where it nucleates assembly of the 50S subunit. This chain is Large ribosomal subunit protein uL3, found in Janthinobacterium sp. (strain Marseille) (Minibacterium massiliensis).